A 75-amino-acid chain; its full sequence is MNSKYLFVFLILNVIFIDLCQGFLWSLIPSAISAVTSLIKKGRRRRELGSQYDYLQDFRKRELDLDDLLSKFPDY.

A signal peptide spans 1-22; it reads MNSKYLFVFLILNVIFIDLCQG. Position 41 is a lysine amide (K41). A propeptide spanning residues 47 to 75 is cleaved from the precursor; sequence ELGSQYDYLQDFRKRELDLDDLLSKFPDY.

It belongs to the non-disulfide-bridged peptide (NDBP) superfamily. Short antimicrobial peptide (group 4) family. In terms of tissue distribution, expressed by the venom gland.

Its subcellular location is the secreted. In Chaerilus tricostatus (Scorpion), this protein is Peptide Ctri10036.